Consider the following 249-residue polypeptide: 2,3-bisphosphoglycerate-dependent phosphoglycerate mutase (249 aa).

Substrate is bound by residues 9–16 (RHGQSQWN), 22–23 (TG), R61, 88–91 (ERHY), K99, 115–116 (RR), and 184–185 (GN). The active-site Tele-phosphohistidine intermediate is the H10. Catalysis depends on E88, which acts as the Proton donor/acceptor.

Belongs to the phosphoglycerate mutase family. BPG-dependent PGAM subfamily. As to quaternary structure, homodimer.

It catalyses the reaction (2R)-2-phosphoglycerate = (2R)-3-phosphoglycerate. It functions in the pathway carbohydrate degradation; glycolysis; pyruvate from D-glyceraldehyde 3-phosphate: step 3/5. Its function is as follows. Catalyzes the interconversion of 2-phosphoglycerate and 3-phosphoglycerate. This Xylella fastidiosa (strain 9a5c) protein is 2,3-bisphosphoglycerate-dependent phosphoglycerate mutase.